A 496-amino-acid chain; its full sequence is Lysine--tRNA ligase (496 aa).

Positions 408 and 415 each coordinate Mg(2+).

Belongs to the class-II aminoacyl-tRNA synthetase family. As to quaternary structure, homodimer. Mg(2+) is required as a cofactor.

It localises to the cytoplasm. The enzyme catalyses tRNA(Lys) + L-lysine + ATP = L-lysyl-tRNA(Lys) + AMP + diphosphate. In Legionella pneumophila (strain Lens), this protein is Lysine--tRNA ligase.